Here is a 370-residue protein sequence, read N- to C-terminus: MAIMVDPPNGMGNQGKYYYSMWQTLFEIDTKYVPIKPIGRGAYGIVCSSINRETNEKVAIKKIHNVFDNRVDALRTLRELKLLRHLRHENVIALKDIMMPVHRRSFKDVYLVYELMDTDLHQIIKSPQGLSNDHCQYFLFQLLRGLKYLHSAEILHRDLKPGNLLVNANCDLKICDFGLARTNSSKGQFMTEYVVTRWYRAPELLLCCDNYGTSIDVWSVGCIFAELLGRKPIFPGTECLNQLKLIVNVLGTMSESDLEFIDNPKARRYIKSLPYTPGVPLASMYPHAHPLAIDLLQKMLIFDPTKRISVTEALEHPYMSPLYDPSANPPAQVPIDLDIDENISADMIREMMWHEMLHYHPEVVAAMSAR.

The Protein kinase domain maps to Tyr32–Met319. Residues Ile38–Val46 and Lys61 each bind ATP. Asp158 (proton acceptor) is an active-site residue. Phosphothreonine is present on Thr191. A TXY motif is present at residues Thr191–Tyr193. A Phosphotyrosine modification is found at Tyr193.

It belongs to the protein kinase superfamily. CMGC Ser/Thr protein kinase family. MAP kinase subfamily. Dually phosphorylated on Thr-191 and Tyr-193, which activates the enzyme.

It carries out the reaction L-seryl-[protein] + ATP = O-phospho-L-seryl-[protein] + ADP + H(+). The catalysed reaction is L-threonyl-[protein] + ATP = O-phospho-L-threonyl-[protein] + ADP + H(+). Its activity is regulated as follows. Activated by threonine and tyrosine phosphorylation. This is Mitogen-activated protein kinase 3 (MPK3) from Oryza sativa subsp. japonica (Rice).